Reading from the N-terminus, the 328-residue chain is BURP domain-containing protein 11 (328 aa).

The BURP domain maps to 74–318 (FFFRDALRPG…TKLSIVWVPR (245 aa)).

As to expression, expressed in roots.

The polypeptide is BURP domain-containing protein 11 (BURP11) (Oryza sativa subsp. japonica (Rice)).